Reading from the N-terminus, the 390-residue chain is MSAAKQLFKIVPLTPTEINFLQSLAPVVKEHGVTVTSTMYKYMFQTYPEVRSYFNMTNQKTGRQPKVLAFSLYQYILHLNDLTPISGFVNQIVLKHCGLGIKPDQYPVVGESLVQAFKMVLGEAADEHFVEVFKKAYGNLAQTLIDAEASVYKTLAWEEFKDFRVTKLVKEAEDVTSVYLTPVDGFKLKPIIPGEYISFRWDIHNPDITDIQPREYSISQDVKENEYRISVRDIGIVSDYINKKLQVGDIVPVHAPVGTMKYDSISKKGKVAVLAGGIGITPMIPIIEHALKDGKDVELYYSNRSYQSEPFREFFSNLEKENNGKFKLNNYISAENQKLQVKDLEHINPDEYDVYLLGPVAYMHEFKTYLVGKGVSDLKMEFFGPTDPDC.

N-acetylserine is present on Ser2. The region spanning 12 to 149 (PLTPTEINFL…LAQTLIDAEA (138 aa)) is the Globin domain. Residue His96 participates in heme b binding. Catalysis depends on charge relay system residues Tyr106 and Glu148. Residues 157-390 (WEEFKDFRVT…EFFGPTDPDC (234 aa)) form a reductase region. In terms of domain architecture, FAD-binding FR-type spans 158–263 (EEFKDFRVTK…HAPVGTMKYD (106 aa)). FAD is bound by residues Tyr196 and 214 to 217 (REYS). An NADP(+)-binding site is contributed by 277-282 (GIGITP). 382–385 (FFGP) is an FAD binding site.

This sequence belongs to the globin family. Two-domain flavohemoproteins subfamily. In the C-terminal section; belongs to the flavoprotein pyridine nucleotide cytochrome reductase family. It depends on FAD as a cofactor. Requires heme b as cofactor.

It localises to the cytoplasm. The catalysed reaction is 2 nitric oxide + NADPH + 2 O2 = 2 nitrate + NADP(+) + H(+). It catalyses the reaction 2 nitric oxide + NADH + 2 O2 = 2 nitrate + NAD(+) + H(+). Its function is as follows. Is involved in NO detoxification in an aerobic process, termed nitric oxide dioxygenase (NOD) reaction that utilizes O(2) and NAD(P)H to convert NO to nitrate, which protects the fungus from various noxious nitrogen compounds. Therefore, plays a central role in the inducible response to nitrosative stress. In terms of biological role, in the presence of oxygen and NADH, it has NADH oxidase activity, which leads to the generation of superoxide and H(2)O(2). Under anaerobic conditions, it also exhibits nitric oxide reductase and FAD reductase activities. However, all these reactions are much lower than NOD activity. The protein is Flavohemoprotein of Candida norvegensis (Yeast).